The chain runs to 436 residues: O-phosphoseryl-tRNA(Sec) selenium transferase (436 aa).

Residues 1 to 44 form a tetramerization region; it reads MLDFNIEGLIPKNMEKRGELVLNEYLKEIEDVFNHRKIPENGID. Position 72 (R72) interacts with pyridoxal 5'-phosphate. The phosphate loop (P-loop) stretch occupies residues 93 to 103; sequence GRSGNLVDPQP. 3 residues coordinate substrate: R94, S95, and Q102. N6-(pyridoxal phosphate)lysine is present on K278. R307 contributes to the substrate binding site.

This sequence belongs to the SepSecS family. As to quaternary structure, homotetramer. Pyridoxal 5'-phosphate is required as a cofactor.

It catalyses the reaction O-phospho-L-seryl-tRNA(Sec) + selenophosphate + H2O = L-selenocysteinyl-tRNA(Sec) + 2 phosphate. It participates in aminoacyl-tRNA biosynthesis; selenocysteinyl-tRNA(Sec) biosynthesis; selenocysteinyl-tRNA(Sec) from L-seryl-tRNA(Sec) (archaeal/eukaryal route): step 2/2. Converts O-phosphoseryl-tRNA(Sec) to selenocysteinyl-tRNA(Sec) required for selenoprotein biosynthesis. The polypeptide is O-phosphoseryl-tRNA(Sec) selenium transferase (spcS) (Methanococcus maripaludis (strain DSM 14266 / JCM 13030 / NBRC 101832 / S2 / LL)).